The chain runs to 1482 residues: MKPSAECCSPKFWLVLAVLAVSGSKARSQKSPPSIGIAVILVGTSDEVAIKDAHEKDDFHHLSVVPRVELVAMNETDPKSIITRICDLMSDRKIQGVVFADDTDQEAIAQILDFISAQTLTPILGIHGGSSMIMADKDESSMFFQFGPSIEQQASVMLNIMEEYDWYIFSIVTTYFPGYQDFVNKIRSTIENSFVGWELEEVLLLDMSLDDGDSKIQNQLKKLQSPIILLYCTKEEATYIFEVANSVGLTGYGYTWIVPSLVAGDTDTVPSEFPTGLISVSYDEWDYGLPARVRDGIAIITTAASDMLSEHSFIPEPKSSCYNTHEKRIYQSNMLNRYLINVTFEGRNLSFSEDGYQMHPKLVIILLNKERKWERVGKWKDKSLQMKYYVWPRMCPETEEQEDDHLSIVTLEEAPFVIVESVDPLSGTCMRNTVPCQKRIISENKTDEEPGYIKKCCKGFCIDILKKISKSVKFTYDLYLVTNGKHGKKINGTWNGMIGEVVMKRAYMAVGSLTINEERSEVVDFSVPFIETGISVMVSRSNGTVSPSAFLEPFSADVWVMMFVMLLIVSAVAVFVFEYFSPVGYNRCLADGREPGGPSFTIGKAIWLLWGLVFNNSVPVQNPKGTTSKIMVSVWAFFAVIFLASYTANLAAFMIQEEYVDQVSGLSDKKFQRPNDFSPPFRFGTVPNGSTERNIRNNYAEMHAYMGKFNQRGVDDALLSLKTGKLDAFIYDAAVLNYMAGRDEGCKLVTIGSGKVFASTGYGIAIQKDSGWKRQVDLAILQLFGDGEMEELEALWLTGICHNEKNEVMSSQLDIDNMAGVFYMLGAAMALSLITFICEHLFYWQFRHCFMGVCSGKPGMVFSISRGIYSCIHGVAIEERQSVMNSPTATMNNTHSNILRLLRTAKNMANLSGVNGSPQSALDFIRRESSVYDISEHRRSFTHSDCKSYNNPPCEENLFSDYISEVERTFGNLQLKDSNVYQDHYHHHHRPHSIGSTSSIDGLYDCDNPPFTTQPRSISKKPLDIGLPSSKHSQLSDLYGKFSFKSDRYSGHDDLIRSDVSDISTHTVTYGNIEGNAAKRRKQQYKDSLKKRPASAKSRREFDEIELAYRRRPPRSPDHKRYFRDKEGLRDFYLDQFRTKENSPHWEHVDLTDIYKERSDDFKRDSVSGGGPCTNRSHLKHGTGEKHGVVGGVPAPWEKNLTNVDWEDRSGGNFCRSCPSKLHNYSSTVAGQNSGRQACIRCEACKKAGNLYDISEDNSLQELDQPAAPVAVTSNASSTKYPQSPTNSKAQKKNRNKLRRQHSYDTFVDLQKEEAALAPRSVSLKDKGRFMDGSPYAHMFEMPAGESSFANKSSVPTAGHHHNNPGSGYMLSKSLYPDRVTQNPFIPTFGDDQCLLHGSKSYFFRQPTVAGASKTRPDFRALVTNKPVVVTLHGAVPGRFQKDICIGNQSNPCVPNNKNPRAFNGSSNGHVYEKLSSIESDV.

The N-terminal stretch at 1 to 26 (MKPSAECCSPKFWLVLAVLAVSGSKA) is a signal peptide. Residues 27–557 (RSQKSPPSIG…SAFLEPFSAD (531 aa)) lie on the Extracellular side of the membrane. A glycan (N-linked (GlcNAc...) asparagine) is linked at Asn74. Cysteines 86 and 321 form a disulfide. The Zn(2+) site is built by His127 and Glu284. N-linked (GlcNAc...) asparagine glycans are attached at residues Asn341, Asn348, Asn444, and Asn491. 2 cysteine pairs are disulfide-bonded: Cys429–Cys456 and Cys436–Cys457. L-glutamate contacts are provided by Thr514 and Arg519. N-linked (GlcNAc...) asparagine glycosylation occurs at Asn542. Residues 558-576 (VWVMMFVMLLIVSAVAVFV) traverse the membrane as a helical segment. Residues 577 to 603 (FEYFSPVGYNRCLADGREPGGPSFTIG) are Cytoplasmic-facing. The segment at residues 604–623 (KAIWLLWGLVFNNSVPVQNP) is an intramembrane region (discontinuously helical). The interval 604 to 623 (KAIWLLWGLVFNNSVPVQNP) is pore-forming. Residues 624-630 (KGTTSKI) are Cytoplasmic-facing. Residues 631-646 (MVSVWAFFAVIFLASY) form a helical membrane-spanning segment. At 647-817 (TANLAAFMIQ…VMSSQLDIDN (171 aa)) the chain is on the extracellular side. N-linked (GlcNAc...) asparagine glycosylation occurs at Asn688. L-glutamate is bound by residues Ser690, Thr691, and Asp732. A disulfide bridge connects residues Cys746 and Cys801. Residues 818–837 (MAGVFYMLGAAMALSLITFI) form a helical membrane-spanning segment. At 838-1482 (CEHLFYWQFR…EKLSSIESDV (645 aa)) the chain is on the cytoplasmic side. Residues Ser882, Ser886, Ser917, and Ser920 each carry the phosphoserine modification. Residues Tyr962 and Tyr1039 each carry the phosphotyrosine modification. Phosphoserine is present on residues Ser1058, Ser1061, and Ser1064. Phosphotyrosine occurs at positions 1109 and 1133. The residue at position 1143 (Ser1143) is a Phosphoserine. Tyr1155 is modified (phosphotyrosine). The interval 1161 to 1194 (DFKRDSVSGGGPCTNRSHLKHGTGEKHGVVGGVP) is disordered. Residues Ser1255 and Ser1259 each carry the phosphoserine modification. Positions 1269–1301 (PVAVTSNASSTKYPQSPTNSKAQKKNRNKLRRQ) are disordered. Positions 1272-1289 (VTSNASSTKYPQSPTNSK) are enriched in polar residues. The span at 1290–1301 (AQKKNRNKLRRQ) shows a compositional bias: basic residues. Residues 1292–1304 (KKNRNKLRRQHSY) are interaction with DAPK1. Residue Ser1303 is modified to Phosphoserine. Tyr1472 is modified (phosphotyrosine). A PDZ-binding motif is present at residues 1480–1482 (SDV).

Belongs to the glutamate-gated ion channel (TC 1.A.10.1) family. NR2B/GRIN2B subfamily. In terms of assembly, heterotetramer. Forms heterotetrameric channels composed of two GluN1/zeta subunits (GRIN1), and two identical GluN2/epsilon subunits (GRIN2A, GRIN2B, GRIN2C or GRIN2D) or GluN3 subunits (GRIN3A or GRIN3B) (in vitro). Can also form heterotetrameric channels that contain at least two GluN1 subunits and at least two different GluN2 subunits (or a combination of one GluN2 and one GluN3 subunits) (in vitro). In vivo, the subunit composition may depend on the expression levels of the different subunits. Found in a complex with GRIN1, GRIN3A and PPP2CB. Found in a complex with GRIN1 and GRIN3B. Interacts with MAGI3. Interacts with HIP1 and NETO1. Interacts with PDZ domains of PATJ, DLG3 and DLG4. Interacts with DAPK1. Found in a complex with GRIN1 and PRR7. Interacts with PRR7. Interacts with CAMK2A. Interacts with ARC; preventing ARC oligomerization. Interacts with TMEM25. Interacts (via the extreme C-terminus) with FRMPD2 (via the second PDZ domain); the interaction is direct and is likely to promote NMDAR-mediated neural signal transmission. Interacts with FAM81A; the interaction facilitates condensate formation via liquid-liquid phase separation. Post-translationally, phosphorylated on tyrosine residues. Phosphorylation at Ser-1303 by DAPK1 enhances synaptic NMDA receptor channel activity. In terms of tissue distribution, expressed in the hippocampus including the dentate gyrus (at protein level). Detected in adult olfactory bulb, brain cortex, hippocampus, striatum, thalamus, superior colliculus, with much lower levels in inferior colliculus, midbrain and cerebellum.

The protein resides in the cell membrane. The protein localises to the postsynaptic cell membrane. It localises to the late endosome. It is found in the lysosome. Its subcellular location is the cytoplasm. The protein resides in the cytoskeleton. It carries out the reaction Ca(2+)(in) = Ca(2+)(out). The catalysed reaction is Na(+)(in) = Na(+)(out). It catalyses the reaction K(+)(in) = K(+)(out). Its activity is regulated as follows. NMDA glutamate receptor activity is inhibited by micromolar levels of zinc ions. NMDA glutamate receptor activity is inhibited by ifenprodil. Functionally, component of N-methyl-D-aspartate (NMDA) receptors (NMDARs) that function as heterotetrameric, ligand-gated cation channels with high calcium permeability and voltage-dependent block by Mg(2+). Participates in synaptic plasticity for learning and memory formation by contributing to the long-term depression (LTD) of hippocampus membrane currents. Channel activation requires binding of the neurotransmitter L-glutamate to the GluN2 subunit, glycine or D-serine binding to the GluN1 subunit, plus membrane depolarization to eliminate channel inhibition by Mg(2+). NMDARs mediate simultaneously the potasium efflux and the influx of calcium and sodium. Each GluN2 subunit confers differential attributes to channel properties, including activation, deactivation and desensitization kinetics, pH sensitivity, Ca2(+) permeability, and binding to allosteric modulators. In concert with DAPK1 at extrasynaptic sites, acts as a central mediator for stroke damage. Its phosphorylation at Ser-1303 by DAPK1 enhances synaptic NMDA receptor channel activity inducing injurious Ca2+ influx through them, resulting in an irreversible neuronal death. The polypeptide is Glutamate receptor ionotropic, NMDA 2B (Rattus norvegicus (Rat)).